Reading from the N-terminus, the 1229-residue chain is DNA-directed RNA polymerase subunit beta (1229 aa).

The interval 1175–1229 is disordered; the sequence is ESIDEDEQPQGLGAFERGLEEVENGEEDDDKEKFYEDLMDASQEQDESADDDIDE. Composition is skewed to acidic residues over residues 1195–1204 and 1211–1229; these read EVENGEEDDD and DLMD…DIDE.

This sequence belongs to the RNA polymerase beta chain family. In terms of assembly, the RNAP catalytic core consists of 2 alpha, 1 beta, 1 beta' and 1 omega subunit. When a sigma factor is associated with the core the holoenzyme is formed, which can initiate transcription.

The enzyme catalyses RNA(n) + a ribonucleoside 5'-triphosphate = RNA(n+1) + diphosphate. DNA-dependent RNA polymerase catalyzes the transcription of DNA into RNA using the four ribonucleoside triphosphates as substrates. This Caldicellulosiruptor saccharolyticus (strain ATCC 43494 / DSM 8903 / Tp8T 6331) protein is DNA-directed RNA polymerase subunit beta.